The chain runs to 947 residues: Pyruvate, phosphate dikinase 1, chloroplastic (947 aa).

Residues 1-62 (MAASVSRAIC…GRGQHCSPLR (62 aa)) constitute a chloroplast transit peptide. The interval 21–54 (DREATSFARRSVAAPRPPHAKAAGVIRSDSGAGR) is disordered. Residue Ala63 is modified to N-acetylalanine; partial. Thr309 is modified (phosphothreonine). Ser506 is subject to Phosphoserine. Thr527 bears the Phosphothreonine; by PDRP1 mark. The residue at position 528 (Ser528) is a Phosphoserine; by PDRP1. The Tele-phosphohistidine intermediate role is filled by His529. Substrate-binding residues include Arg635, Arg692, Glu821, Gly842, Thr843, Asn844, and Asp845. Glu821 contributes to the Mg(2+) binding site. Asp845 is a Mg(2+) binding site. Cys907 serves as the catalytic Proton donor.

Belongs to the PEP-utilizing enzyme family. Homotetramer. Mg(2+) serves as cofactor. Post-translationally, phosphorylation of Thr-527 in the dark inactivates the enzyme, dephosphorylation upon light stimulation reactivates the enzyme. More highly phosphorylated when grown under high rather than low light regimes (70 vs 900 umol photons/m-2/s). the degree of phosphorylation is strictly regulated by light intensity and the light/dark transition has no influence. Phosphorylated in both mesophyll and bundle sheath cells. The phosphorylation at Ser-528 may be important for the phosphorylation at Thr-527 and may also be regulated by light intensity. As to expression, isoform C4PPDKZM1 mainly localized in mesophyll cells and only a low level is found in bundle sheath cells. Isoform CYPPDKZM1 expressed in roots, stems and etiolated leaves.

The protein resides in the plastid. It is found in the chloroplast. It localises to the cytoplasm. The enzyme catalyses pyruvate + phosphate + ATP = phosphoenolpyruvate + AMP + diphosphate + H(+). Its pathway is photosynthesis; C4 acid pathway. With respect to regulation, activated by light-induced dephosphorylation. Inhibited by dark-induced phosphorylation. Both reactions are catalyzed by PDRP1. Inactivated by cold due to the dissociation of the homotetramer. Independent of circadian regulation. In terms of biological role, formation of phosphoenolpyruvate, which is the primary acceptor of CO(2) in C4 and some Crassulacean acid metabolism plants. This is Pyruvate, phosphate dikinase 1, chloroplastic from Zea mays (Maize).